The chain runs to 140 residues: Transcription antitermination protein NusB (140 aa).

Belongs to the NusB family.

Functionally, involved in transcription antitermination. Required for transcription of ribosomal RNA (rRNA) genes. Binds specifically to the boxA antiterminator sequence of the ribosomal RNA (rrn) operons. In Streptococcus pneumoniae (strain JJA), this protein is Transcription antitermination protein NusB.